The sequence spans 264 residues: Small ribosomal subunit protein mS23 (264 aa).

Residues 233–264 (ARTSNPAGSWKDDTTLNTAQEEESTTSENLHF) form a disordered region.

This sequence belongs to the mitochondrion-specific ribosomal protein mS23 family. In terms of assembly, component of the mitochondrial small ribosomal subunit. Mature mitochondrial ribosomes consist of a small (37S) and a large (54S) subunit. The 37S subunit contains at least 33 different proteins and 1 molecule of RNA (15S). The 54S subunit contains at least 45 different proteins and 1 molecule of RNA (21S).

The protein localises to the mitochondrion. The polypeptide is Small ribosomal subunit protein mS23 (RSM25) (Saccharomyces cerevisiae (strain YJM789) (Baker's yeast)).